Consider the following 827-residue polypeptide: Periplasmic nitrate reductase (827 aa).

A signal peptide (tat-type signal) is located at residues 1–32 (MELNRRDFMKANAAAAAALAAGITLPVKNVYA). The region spanning 37-93 (IKWDKAPCRFCGTGCSVLVGTQNGRMVASQGDPDAEVNRGLNCIKGYFLPKIIYGKD) is the 4Fe-4S Mo/W bis-MGD-type domain. 4 residues coordinate [4Fe-4S] cluster: Cys-44, Cys-47, Cys-51, and Cys-79. Mo-bis(molybdopterin guanine dinucleotide) contacts are provided by residues Lys-81, Gln-148, Asn-173, Cys-177, 210–217 (WGSNMAEM), 241–245 (STFEH), Met-371, Gln-375, Asn-481, 507–508 (SD), Lys-530, Asp-557, and 717–726 (TGRVLEHWHS). Phe-793 contributes to the substrate binding site. The Mo-bis(molybdopterin guanine dinucleotide) site is built by Asn-801 and Lys-818.

Belongs to the prokaryotic molybdopterin-containing oxidoreductase family. NasA/NapA/NarB subfamily. Component of the periplasmic nitrate reductase NapAB complex composed of NapA and NapB. Requires [4Fe-4S] cluster as cofactor. Mo-bis(molybdopterin guanine dinucleotide) serves as cofactor. Post-translationally, predicted to be exported by the Tat system. The position of the signal peptide cleavage has not been experimentally proven.

The protein localises to the periplasm. It catalyses the reaction 2 Fe(II)-[cytochrome] + nitrate + 2 H(+) = 2 Fe(III)-[cytochrome] + nitrite + H2O. Functionally, catalytic subunit of the periplasmic nitrate reductase complex NapAB. Receives electrons from NapB and catalyzes the reduction of nitrate to nitrite. This chain is Periplasmic nitrate reductase, found in Glaesserella parasuis serovar 5 (strain SH0165) (Haemophilus parasuis).